Here is a 415-residue protein sequence, read N- to C-terminus: Serine hydroxymethyltransferase 1 (415 aa).

(6S)-5,6,7,8-tetrahydrofolate contacts are provided by residues L117 and 121 to 123; that span reads GHL. K225 bears the N6-(pyridoxal phosphate)lysine mark. 349 to 351 contributes to the (6S)-5,6,7,8-tetrahydrofolate binding site; the sequence is SPF.

Belongs to the SHMT family. As to quaternary structure, homodimer. The cofactor is pyridoxal 5'-phosphate.

The protein localises to the cytoplasm. It carries out the reaction (6R)-5,10-methylene-5,6,7,8-tetrahydrofolate + glycine + H2O = (6S)-5,6,7,8-tetrahydrofolate + L-serine. Its pathway is one-carbon metabolism; tetrahydrofolate interconversion. It functions in the pathway amino-acid biosynthesis; glycine biosynthesis; glycine from L-serine: step 1/1. Catalyzes the reversible interconversion of serine and glycine with tetrahydrofolate (THF) serving as the one-carbon carrier. This reaction serves as the major source of one-carbon groups required for the biosynthesis of purines, thymidylate, methionine, and other important biomolecules. Also exhibits THF-independent aldolase activity toward beta-hydroxyamino acids, producing glycine and aldehydes, via a retro-aldol mechanism. The polypeptide is Serine hydroxymethyltransferase 1 (Sulfurimonas denitrificans (strain ATCC 33889 / DSM 1251) (Thiomicrospira denitrificans (strain ATCC 33889 / DSM 1251))).